Here is a 906-residue protein sequence, read N- to C-terminus: Ankyrin repeat and MYND domain-containing protein 1 (906 aa).

MORN repeat units lie at residues 16-38 (YHGQFYRDHFHGLGTYTWPDGSS), 39-59 (FTGTFYLSQREGYGTMHTKTM), and 61-83 (FQGLYKEDQRFGPGIETYPDGSQ). The stretch at 282 to 311 (KGYTVLAAAAMHSHLDIVNLLLDFGADVNK) is one ANK 1 repeat. The span at 391–400 (SMQTPESSNM) shows a compositional bias: polar residues. Positions 391-411 (SMQTPESSNMLHKEEVSPVKT) are disordered. 6 ANK repeats span residues 479–508 (VRKMAQSMVERRNRWMTITLLLRRGADPNL), 511–540 (VPMQALFLAVKAGDVEGVRLLLMSGAQTDI), 547–579 (QSLTPLHIAVSLPGEEGVKITELLLHVITNVDA), 623–657 (GGRTALHVACEREDNKKCARDIVRLLLSHRANPNV), 660–689 (SGHSPLSLAIASGNDLVVKELLSQGADPNL), and 701–732 (VVCDLVYEQQRSVENKIALIDRLISYGADVLN). Positions 845, 848, 859, 862, 868, 872, 881, and 885 each coordinate Zn(2+). The MYND-type zinc-finger motif lies at 845–885 (CYQCGRSIGVRLSPCPRCYGILTCSKYCKTKAWIEFHKKDC).

This chain is Ankyrin repeat and MYND domain-containing protein 1 (Ankmy1), found in Mus musculus (Mouse).